Reading from the N-terminus, the 171-residue chain is 2-vinyl bacteriochlorophyllide hydratase (171 aa).

It participates in porphyrin-containing compound metabolism; bacteriochlorophyll biosynthesis (light-independent). The chain is 2-vinyl bacteriochlorophyllide hydratase (bchF) from Rhodobacter capsulatus (strain ATCC BAA-309 / NBRC 16581 / SB1003).